The chain runs to 419 residues: Adenylosuccinate synthetase (419 aa).

Residues 15-21 (GDEGKGK) and 43-45 (GHT) contribute to the GTP site. Asp-16 acts as the Proton acceptor in catalysis. Mg(2+)-binding residues include Asp-16 and Gly-43. IMP is bound by residues 16-19 (DEGK), 41-44 (NAGH), Thr-128, Arg-142, Gln-223, Thr-238, and Arg-302. The Proton donor role is filled by His-44. 298-304 (TTTGRAR) serves as a coordination point for substrate. Residues Arg-304, 330-332 (KLD), and 408-410 (STS) each bind GTP.

It belongs to the adenylosuccinate synthetase family. In terms of assembly, homodimer. The cofactor is Mg(2+).

Its subcellular location is the cytoplasm. The catalysed reaction is IMP + L-aspartate + GTP = N(6)-(1,2-dicarboxyethyl)-AMP + GDP + phosphate + 2 H(+). Its pathway is purine metabolism; AMP biosynthesis via de novo pathway; AMP from IMP: step 1/2. Plays an important role in the de novo pathway of purine nucleotide biosynthesis. Catalyzes the first committed step in the biosynthesis of AMP from IMP. The protein is Adenylosuccinate synthetase of Sulfurimonas denitrificans (strain ATCC 33889 / DSM 1251) (Thiomicrospira denitrificans (strain ATCC 33889 / DSM 1251)).